We begin with the raw amino-acid sequence, 294 residues long: Cutinase (294 aa).

An N-terminal signal peptide occupies residues 1–33 (MLRARPSHRLASAAAVVAATGAALLAGSSPAAA). The cysteines at positions 36 and 107 are disulfide-linked. The active-site Nucleophile is serine 118. A disulfide bridge connects residues cysteine 180 and cysteine 187. Residue aspartate 184 is part of the active site. Residue histidine 198 is the Proton donor/acceptor of the active site. Residues 222-241 (GTPTTPTPTPTPTPVPTTCV) are disordered. Over residues 226 to 236 (TPTPTPTPTPV) the composition is skewed to pro residues. The interval 240 to 294 (CVRDSTRDHVAADRAVSLYGRAYARGSRDSLGATSSYNVVSLQQVEGGWRLVTAC) is may be involved in substrate binding.

It belongs to the cutinase family.

Its subcellular location is the secreted. It catalyses the reaction cutin + H2O = cutin monomers.. The enzyme catalyses a tetradecanoate ester + H2O = an aliphatic alcohol + tetradecanoate + H(+). The catalysed reaction is hexadecanoate ester + H2O = an aliphatic alcohol + hexadecanoate + H(+). It carries out the reaction a butanoate ester + H2O = an aliphatic alcohol + butanoate + H(+). It catalyses the reaction an octanoate ester + H2O = an aliphatic alcohol + octanoate + H(+). In terms of biological role, catalyzes the hydrolysis of cutin, a polyester that forms the structure of plant cuticle. Shows esterase activity towards p-nitrophenol-linked aliphatic esters (pNP-aliphatic esters). Can depolymerize synthetic polyesters such as poly(epsilon-caprolactone) (PCL) and poly(1,3-propylene adipate) (PPA). Exhibits some activity on poly(lactic acid) (PLA). Can bind but not hydrolyze poly(hydroxybutyrate) (PHB). In Kineococcus radiotolerans (strain ATCC BAA-149 / DSM 14245 / SRS30216), this protein is Cutinase.